The chain runs to 960 residues: Phosphoenolpyruvate carboxylase 1 (960 aa).

Ser7 carries the post-translational modification Phosphoserine. Catalysis depends on residues His168 and Lys596.

The protein belongs to the PEPCase type 1 family. In terms of assembly, homotetramer. Mg(2+) is required as a cofactor.

Its subcellular location is the cytoplasm. The enzyme catalyses oxaloacetate + phosphate = phosphoenolpyruvate + hydrogencarbonate. The protein operates within photosynthesis; C3 acid pathway. With respect to regulation, by light-reversible phosphorylation. Functionally, through the carboxylation of phosphoenolpyruvate (PEP) it forms oxaloacetate, a four-carbon dicarboxylic acid source for the tricarboxylic acid cycle. The chain is Phosphoenolpyruvate carboxylase 1 (PEPC) from Sorghum bicolor (Sorghum).